A 261-amino-acid chain; its full sequence is uncharacterized protein (261 aa).

Residue E46 is part of the active site.

The protein belongs to the PhzF family.

This is an uncharacterized protein from Pseudomonas aeruginosa (strain ATCC 15692 / DSM 22644 / CIP 104116 / JCM 14847 / LMG 12228 / 1C / PRS 101 / PAO1).